The following is a 266-amino-acid chain: Glucosamine-6-phosphate deaminase 1 (266 aa).

D67 (proton acceptor; for enolization step) is an active-site residue. The For ring-opening step role is filled by N136. H138 (proton acceptor; for ring-opening step) is an active-site residue. The active-site For ring-opening step is E143.

The protein belongs to the glucosamine/galactosamine-6-phosphate isomerase family. In terms of assembly, homohexamer.

It is found in the cytoplasm. It carries out the reaction alpha-D-glucosamine 6-phosphate + H2O = beta-D-fructose 6-phosphate + NH4(+). Catalyzes the reversible conversion of alpha-D-glucosamine 6-phosphate (GlcN-6P) into beta-D-fructose 6-phosphate (Fru-6P) and ammonium ion, a regulatory reaction step in de novo uridine diphosphate-N-acetyl-alpha-D-glucosamine (UDP-GlcNAc) biosynthesis via hexosamine pathway. This Giardia intestinalis (Giardia lamblia) protein is Glucosamine-6-phosphate deaminase 1 (GPI1).